The sequence spans 556 residues: (-)-alpha-pinene synthase (556 aa).

Residues aspartate 309, aspartate 313, aspartate 453, and glutamate 461 each contribute to the Mg(2+) site. A DDXXD motif motif is present at residues 309–313 (DDMYD).

The protein belongs to the terpene synthase family. Tpsa subfamily. Requires Mg(2+) as cofactor. The cofactor is Mn(2+). As to expression, expressed in ripe fruits and roots. Not detected in vegetative tissues.

It is found in the cytoplasm. Its subcellular location is the cytosol. It carries out the reaction (2E)-geranyl diphosphate = (1S,5S)-alpha-pinene + diphosphate. Its pathway is secondary metabolite biosynthesis; terpenoid biosynthesis. Its function is as follows. Monoterpene synthase catalyzing the production of (-)-alpha-pinene, beta-phellandrene and beta-myrcene as the major products. Unable to use farnesyl diphosphate as substrate. Exclusively expressed in the fruit of wild strawberries. Not detected in cultivated varieties. This Fragaria vesca (Woodland strawberry) protein is (-)-alpha-pinene synthase.